A 133-amino-acid polypeptide reads, in one-letter code: U6 snRNA-associated Sm-like protein LSm1 (133 aa).

The Sm domain maps to 5–80 (PGTASLIEDI…VVLLGEIDLE (76 aa)). Ser123 bears the Phosphoserine mark. Thr129 carries the phosphothreonine modification.

The protein belongs to the snRNP Sm proteins family. Interacts with SLBP; interaction with SLBP occurs when histone mRNA is being rapidly degraded during the S phase. LSm subunits form a heteromer with a donut shape.

Its subcellular location is the cytoplasm. It is found in the P-body. Functionally, plays a role in the degradation of histone mRNAs, the only eukaryotic mRNAs that are not polyadenylated. Probably also part of an LSm subunits-containing complex involved in the general process of mRNA degradation. The chain is U6 snRNA-associated Sm-like protein LSm1 (LSM1) from Homo sapiens (Human).